Consider the following 285-residue polypeptide: Diaminopimelate epimerase (285 aa).

Substrate-binding residues include Asn-15 and Asn-68. Cys-77 functions as the Proton donor in the catalytic mechanism. Substrate is bound by residues 78–79, Asn-165, Asn-201, and 219–220; these read GN and ER. Cys-228 serves as the catalytic Proton acceptor. 229-230 contributes to the substrate binding site; the sequence is GT.

This sequence belongs to the diaminopimelate epimerase family. In terms of assembly, homodimer.

The protein localises to the cytoplasm. The enzyme catalyses (2S,6S)-2,6-diaminopimelate = meso-2,6-diaminopimelate. It participates in amino-acid biosynthesis; L-lysine biosynthesis via DAP pathway; DL-2,6-diaminopimelate from LL-2,6-diaminopimelate: step 1/1. Functionally, catalyzes the stereoinversion of LL-2,6-diaminopimelate (L,L-DAP) to meso-diaminopimelate (meso-DAP), a precursor of L-lysine and an essential component of the bacterial peptidoglycan. This chain is Diaminopimelate epimerase, found in Synechococcus sp. (strain JA-3-3Ab) (Cyanobacteria bacterium Yellowstone A-Prime).